Reading from the N-terminus, the 281-residue chain is Tryptophan 2,3-dioxygenase (281 aa).

Substrate contacts are provided by residues 50-54 (FIIQH), Y112, and R116. H239 serves as a coordination point for heme. Residue T253 coordinates substrate.

This sequence belongs to the tryptophan 2,3-dioxygenase family. As to quaternary structure, homotetramer. It depends on heme as a cofactor.

It carries out the reaction L-tryptophan + O2 = N-formyl-L-kynurenine. The protein operates within amino-acid degradation; L-tryptophan degradation via kynurenine pathway; L-kynurenine from L-tryptophan: step 1/2. In terms of biological role, heme-dependent dioxygenase that catalyzes the oxidative cleavage of the L-tryptophan (L-Trp) pyrrole ring and converts L-tryptophan to N-formyl-L-kynurenine. Catalyzes the oxidative cleavage of the indole moiety. The chain is Tryptophan 2,3-dioxygenase from Saccharopolyspora erythraea (strain ATCC 11635 / DSM 40517 / JCM 4748 / NBRC 13426 / NCIMB 8594 / NRRL 2338).